Reading from the N-terminus, the 468-residue chain is tRNA threonylcarbamoyladenosine dehydratase (468 aa).

The next 3 helical transmembrane spans lie at 15 to 35 (FWIA…TLEF), 109 to 129 (NSFV…NMLA), and 315 to 335 (ILPV…TYVL).

This sequence belongs to the HesA/MoeB/ThiF family.

Its subcellular location is the mitochondrion outer membrane. Its function is as follows. Catalyzes the ATP-dependent dehydration of threonylcarbamoyladenosine at position 37 (t(6)A37) to form cyclic t(6)A37 (ct(6)A37) in tRNAs that read codons beginning with adenine. This Schizosaccharomyces pombe (strain 972 / ATCC 24843) (Fission yeast) protein is tRNA threonylcarbamoyladenosine dehydratase (tcd1).